The following is a 265-amino-acid chain: Glutamate racemase (265 aa).

Substrate is bound by residues 7–8 (DS) and 39–40 (YG). The Proton donor/acceptor role is filled by Cys70. 71 to 72 (NT) provides a ligand contact to substrate. Residue Cys177 is the Proton donor/acceptor of the active site.

It belongs to the aspartate/glutamate racemases family.

It carries out the reaction L-glutamate = D-glutamate. Its pathway is cell wall biogenesis; peptidoglycan biosynthesis. Provides the (R)-glutamate required for cell wall biosynthesis. The polypeptide is Glutamate racemase (Prochlorococcus marinus (strain NATL1A)).